The primary structure comprises 328 residues: dITP/XTP pyrophosphatase (328 aa).

The tract at residues 1–129 (MSEKIYEYKD…ATSEQGFGDT (129 aa)) is unknown. Residues 130-324 (ILIATRNEGK…KLMEVFPAWQ (195 aa)) form an NTP pyrophosphatase region. 134–139 (TRNEGK) contacts substrate. The active-site Proton acceptor is the Asp196. A Mg(2+)-binding site is contributed by Asp196. Residues Ser197, 280 to 283 (FGYD), Lys303, and 308 to 309 (HR) contribute to the substrate site.

Belongs to the HAM1 NTPase family. In terms of assembly, homodimer. Mg(2+) serves as cofactor.

It catalyses the reaction XTP + H2O = XMP + diphosphate + H(+). The enzyme catalyses dITP + H2O = dIMP + diphosphate + H(+). The catalysed reaction is ITP + H2O = IMP + diphosphate + H(+). Its function is as follows. Pyrophosphatase that catalyzes the hydrolysis of nucleoside triphosphates to their monophosphate derivatives, with a high preference for the non-canonical purine nucleotides XTP (xanthosine triphosphate), dITP (deoxyinosine triphosphate) and ITP. Seems to function as a house-cleaning enzyme that removes non-canonical purine nucleotides from the nucleotide pool, thus preventing their incorporation into DNA/RNA and avoiding chromosomal lesions. This chain is dITP/XTP pyrophosphatase, found in Streptococcus pyogenes serotype M6 (strain ATCC BAA-946 / MGAS10394).